The chain runs to 268 residues: Tryptophan synthase alpha chain (268 aa).

Active-site proton acceptor residues include Glu49 and Asp60.

The protein belongs to the TrpA family. As to quaternary structure, tetramer of two alpha and two beta chains.

It carries out the reaction (1S,2R)-1-C-(indol-3-yl)glycerol 3-phosphate + L-serine = D-glyceraldehyde 3-phosphate + L-tryptophan + H2O. It functions in the pathway amino-acid biosynthesis; L-tryptophan biosynthesis; L-tryptophan from chorismate: step 5/5. Its function is as follows. The alpha subunit is responsible for the aldol cleavage of indoleglycerol phosphate to indole and glyceraldehyde 3-phosphate. This Pseudomonas paraeruginosa (strain DSM 24068 / PA7) (Pseudomonas aeruginosa (strain PA7)) protein is Tryptophan synthase alpha chain.